We begin with the raw amino-acid sequence, 394 residues long: S-adenosylmethionine synthase 3 (394 aa).

Glutamate 11 lines the Mg(2+) pocket. ATP is bound at residue histidine 17. Position 45 (glutamate 45) interacts with K(+). L-methionine is bound by residues glutamate 58 and glutamine 101. Residues 169 to 171 (DGK), 237 to 240 (SGRF), aspartate 248, 254 to 255 (RK), alanine 271, lysine 275, and lysine 279 each bind ATP. Aspartate 248 is a binding site for L-methionine. Lysine 279 serves as a coordination point for L-methionine.

Belongs to the AdoMet synthase family. As to quaternary structure, homotetramer. Requires Mn(2+) as cofactor. The cofactor is Mg(2+). Co(2+) serves as cofactor. K(+) is required as a cofactor.

Its subcellular location is the cytoplasm. It catalyses the reaction L-methionine + ATP + H2O = S-adenosyl-L-methionine + phosphate + diphosphate. Its pathway is amino-acid biosynthesis; S-adenosyl-L-methionine biosynthesis; S-adenosyl-L-methionine from L-methionine: step 1/1. Its function is as follows. Catalyzes the formation of S-adenosylmethionine from methionine and ATP. The reaction comprises two steps that are both catalyzed by the same enzyme: formation of S-adenosylmethionine (AdoMet) and triphosphate, and subsequent hydrolysis of the triphosphate. The sequence is that of S-adenosylmethionine synthase 3 (SAM3) from Hordeum vulgare (Barley).